Here is a 231-residue protein sequence, read N- to C-terminus: High-affinity zinc uptake system ATP-binding protein ZnuC (231 aa).

An ABC transporter domain is found at 4 to 230; sequence VSLKDIVFGY…CLTWNSCDEL (227 aa).

Belongs to the ABC transporter superfamily. As to quaternary structure, the complex is composed of two ATP-binding proteins (ZnuC), two transmembrane proteins (ZnuB) and a solute-binding protein (ZnuA).

The protein resides in the cell membrane. The catalysed reaction is Zn(2+)(out) + ATP(in) + H2O(in) = Zn(2+)(in) + ADP(in) + phosphate(in) + H(+)(in). Part of the high-affinity ABC transporter complex ZnuABC involved in zinc import. Responsible for energy coupling to the transport system. ZnuABC-mediated zinc transport is required for comF expression and competence development. In Bacillus subtilis (strain 168), this protein is High-affinity zinc uptake system ATP-binding protein ZnuC (znuC).